Reading from the N-terminus, the 234-residue chain is Glucosamine-6-phosphate deaminase (234 aa).

Catalysis depends on D62, which acts as the Proton acceptor; for enolization step. N128 serves as the catalytic For ring-opening step. Catalysis depends on H130, which acts as the Proton acceptor; for ring-opening step. E135 acts as the For ring-opening step in catalysis.

This sequence belongs to the glucosamine/galactosamine-6-phosphate isomerase family. NagB subfamily.

It carries out the reaction alpha-D-glucosamine 6-phosphate + H2O = beta-D-fructose 6-phosphate + NH4(+). It participates in amino-sugar metabolism; N-acetylneuraminate degradation; D-fructose 6-phosphate from N-acetylneuraminate: step 5/5. Its function is as follows. Catalyzes the reversible isomerization-deamination of glucosamine 6-phosphate (GlcN6P) to form fructose 6-phosphate (Fru6P) and ammonium ion. The sequence is that of Glucosamine-6-phosphate deaminase from Ligilactobacillus salivarius (strain UCC118) (Lactobacillus salivarius).